The sequence spans 77 residues: Sec-independent protein translocase protein TatA 2 (77 aa).

The chain crosses the membrane as a helical span at residues phenylalanine 2–phenylalanine 22. The segment at lysine 52–alanine 77 is disordered.

Belongs to the TatA/E family. Forms a complex with TatC.

The protein resides in the cell inner membrane. Functionally, part of the twin-arginine translocation (Tat) system that transports large folded proteins containing a characteristic twin-arginine motif in their signal peptide across membranes. TatA could form the protein-conducting channel of the Tat system. The chain is Sec-independent protein translocase protein TatA 2 from Aquifex aeolicus (strain VF5).